The primary structure comprises 394 residues: Probable fatty acid methyltransferase (394 aa).

Residues 128 to 129 (YS), 163 to 171 (LLDVGCGWG), and 189 to 194 (TLSKEQ) contribute to the S-adenosyl-L-methionine site. The active site involves cysteine 358.

The protein belongs to the CFA/CMAS family.

This is Probable fatty acid methyltransferase from Pseudomonas putida (Arthrobacter siderocapsulatus).